Here is a 62-residue protein sequence, read N- to C-terminus: Mu-conotoxin Lt5d (62 aa).

The first 22 residues, 1–22 (MRCLPVFIILLLLIPSAPSVDA), serve as a signal peptide directing secretion. A propeptide spanning residues 23 to 48 (QPTTKDDVPLASLHDNAKRALQMFWN) is cleaved from the precursor.

Belongs to the conotoxin T superfamily. Post-translationally, contains 2 disulfide bonds that can be either 'C1-C3, C2-C4' or 'C1-C4, C2-C3', since these disulfide connectivities have been observed for conotoxins with cysteine framework V (for examples, see AC P0DQQ7 and AC P81755). Expressed by the venom duct.

It localises to the secreted. Its function is as follows. Mu-conotoxins block voltage-gated sodium channels (Nav). This toxin inhibits tetrodotoxin(TTX)-sensitive sodium channels, but does not affect TTX-resistant sodium channels. Reduces the amplitude of currents without changing the activation and inactivation kinetics of currents. The protein is Mu-conotoxin Lt5d of Conus litteratus (Lettered cone).